The chain runs to 215 residues: 3-isopropylmalate dehydratase small subunit (215 aa).

The protein belongs to the LeuD family. LeuD type 1 subfamily. Heterodimer of LeuC and LeuD.

The catalysed reaction is (2R,3S)-3-isopropylmalate = (2S)-2-isopropylmalate. Its pathway is amino-acid biosynthesis; L-leucine biosynthesis; L-leucine from 3-methyl-2-oxobutanoate: step 2/4. Its function is as follows. Catalyzes the isomerization between 2-isopropylmalate and 3-isopropylmalate, via the formation of 2-isopropylmaleate. This chain is 3-isopropylmalate dehydratase small subunit, found in Saccharophagus degradans (strain 2-40 / ATCC 43961 / DSM 17024).